A 572-amino-acid polypeptide reads, in one-letter code: ATP-dependent lipid A-core flippase (572 aa).

5 helical membrane passes run 14 to 34 (IIPY…VAAL), 55 to 75 (VFFL…KGVL), 148 to 168 (IFLL…CFLI), 249 to 269 (MEII…SEVI), and 272 to 292 (SATP…YDPV). Residues 22–304 (FIAMFAMIVV…VSQVNSTIQQ (283 aa)) enclose the ABC transmembrane type-1 domain. In terms of domain architecture, ABC transporter spans 338 to 571 (IEFHDVSFSY…EGEYQLLYNM (234 aa)). 370 to 377 (GPSGGGKT) serves as a coordination point for ATP.

Belongs to the ABC transporter superfamily. Lipid exporter (TC 3.A.1.106) family. Homodimer.

The protein resides in the cell inner membrane. It carries out the reaction ATP + H2O + lipid A-core oligosaccharideSide 1 = ADP + phosphate + lipid A-core oligosaccharideSide 2.. Involved in lipopolysaccharide (LPS) biosynthesis. Translocates lipid A-core from the inner to the outer leaflet of the inner membrane. Transmembrane domains (TMD) form a pore in the inner membrane and the ATP-binding domain (NBD) is responsible for energy generation. This chain is ATP-dependent lipid A-core flippase, found in Desulfotalea psychrophila (strain LSv54 / DSM 12343).